Here is a 689-residue protein sequence, read N- to C-terminus: DNA ligase (689 aa).

Residues 32 to 36, 81 to 82, and Glu-113 each bind NAD(+); these read DAEYD and SL. Residue Lys-115 is the N6-AMP-lysine intermediate of the active site. NAD(+) contacts are provided by Arg-136, Glu-176, Lys-306, and Lys-330. The Zn(2+) site is built by Cys-424, Cys-427, Cys-442, and Cys-448. Residues 606–689 enclose the BRCT domain; that stretch reads AEELPLAEQI…ALLAEHGITI (84 aa).

It belongs to the NAD-dependent DNA ligase family. LigA subfamily. Mg(2+) serves as cofactor. The cofactor is Mn(2+).

It carries out the reaction NAD(+) + (deoxyribonucleotide)n-3'-hydroxyl + 5'-phospho-(deoxyribonucleotide)m = (deoxyribonucleotide)n+m + AMP + beta-nicotinamide D-nucleotide.. Functionally, DNA ligase that catalyzes the formation of phosphodiester linkages between 5'-phosphoryl and 3'-hydroxyl groups in double-stranded DNA using NAD as a coenzyme and as the energy source for the reaction. It is essential for DNA replication and repair of damaged DNA. The polypeptide is DNA ligase (Colwellia psychrerythraea (strain 34H / ATCC BAA-681) (Vibrio psychroerythus)).